We begin with the raw amino-acid sequence, 1563 residues long: Pentafunctional AROM polypeptide (1563 aa).

The 3-dehydroquinate synthase stretch occupies residues 1–382 (MAEPISNPTR…YEPKASVVED (382 aa)). NAD(+)-binding positions include 48-50 (DTN), 82-85 (EYSK), 113-115 (GGV), and Asp-118. Arg-129 is a 7-phospho-2-dehydro-3-deoxy-D-arabino-heptonate binding site. NAD(+) is bound at residue 138-139 (TT). 7-phospho-2-dehydro-3-deoxy-D-arabino-heptonate is bound by residues Asp-145 and Lys-151. Residue Lys-160 coordinates NAD(+). A 7-phospho-2-dehydro-3-deoxy-D-arabino-heptonate-binding site is contributed by Asn-161. NAD(+) is bound by residues 178 to 181 (FLNT) and Asn-189. Glu-193 serves as a coordination point for Zn(2+). 7-phospho-2-dehydro-3-deoxy-D-arabino-heptonate contacts are provided by residues 193–196 (EVIK) and Lys-248. Glu-258 (proton acceptor; for 3-dehydroquinate synthase activity) is an active-site residue. 7-phospho-2-dehydro-3-deoxy-D-arabino-heptonate-binding positions include 262-266 (RNLLN) and His-269. Position 269 (His-269) interacts with Zn(2+). His-273 functions as the Proton acceptor; for 3-dehydroquinate synthase activity in the catalytic mechanism. 2 residues coordinate 7-phospho-2-dehydro-3-deoxy-D-arabino-heptonate: His-285 and Lys-354. His-285 is a Zn(2+) binding site. Positions 395 to 834 (VFAGVPKDLN…WDTMSNYFKV (440 aa)) are EPSP synthase. Cys-816 acts as the For EPSP synthase activity in catalysis. Residues 857 to 1051 (PKSIFIIGMR…KKKPHSFFVS (195 aa)) are shikimate kinase. 864 to 871 (GMRGAGKS) provides a ligand contact to ATP. Positions 1052–1265 (LTVPNVSKAL…AAPGQLSAAE (214 aa)) are 3-dehydroquinase. His-1168 serves as the catalytic Proton acceptor; for 3-dehydroquinate dehydratase activity. The active-site Schiff-base intermediate with substrate; for 3-dehydroquinate dehydratase activity is Lys-1196. Residues 1278–1563 (PRSFHLFGNP…TDAQAAVMGN (286 aa)) are shikimate dehydrogenase.

It in the N-terminal section; belongs to the sugar phosphate cyclases superfamily. Dehydroquinate synthase family. This sequence in the 2nd section; belongs to the EPSP synthase family. The protein in the 3rd section; belongs to the shikimate kinase family. In the 4th section; belongs to the type-I 3-dehydroquinase family. It in the C-terminal section; belongs to the shikimate dehydrogenase family. Homodimer. It depends on Zn(2+) as a cofactor.

The protein resides in the cytoplasm. It carries out the reaction 7-phospho-2-dehydro-3-deoxy-D-arabino-heptonate = 3-dehydroquinate + phosphate. The enzyme catalyses 3-dehydroquinate = 3-dehydroshikimate + H2O. The catalysed reaction is shikimate + NADP(+) = 3-dehydroshikimate + NADPH + H(+). It catalyses the reaction shikimate + ATP = 3-phosphoshikimate + ADP + H(+). It carries out the reaction 3-phosphoshikimate + phosphoenolpyruvate = 5-O-(1-carboxyvinyl)-3-phosphoshikimate + phosphate. Its pathway is metabolic intermediate biosynthesis; chorismate biosynthesis; chorismate from D-erythrose 4-phosphate and phosphoenolpyruvate: step 2/7. It participates in metabolic intermediate biosynthesis; chorismate biosynthesis; chorismate from D-erythrose 4-phosphate and phosphoenolpyruvate: step 3/7. It functions in the pathway metabolic intermediate biosynthesis; chorismate biosynthesis; chorismate from D-erythrose 4-phosphate and phosphoenolpyruvate: step 4/7. The protein operates within metabolic intermediate biosynthesis; chorismate biosynthesis; chorismate from D-erythrose 4-phosphate and phosphoenolpyruvate: step 5/7. Its pathway is metabolic intermediate biosynthesis; chorismate biosynthesis; chorismate from D-erythrose 4-phosphate and phosphoenolpyruvate: step 6/7. In terms of biological role, the AROM polypeptide catalyzes 5 consecutive enzymatic reactions in prechorismate polyaromatic amino acid biosynthesis. In Neurospora crassa (strain ATCC 24698 / 74-OR23-1A / CBS 708.71 / DSM 1257 / FGSC 987), this protein is Pentafunctional AROM polypeptide.